The following is a 167-amino-acid chain: Myelin basic protein (167 aa).

N-acetylalanine is present on Ala-1. Residues Ser-7 and Ser-12 each carry the phosphoserine modification. At Tyr-14 the chain carries Phosphotyrosine. Thr-17 carries the post-translational modification Phosphothreonine. Ser-19 is modified (phosphoserine). The residue at position 20 (Thr-20) is a Phosphothreonine. 2 positions are modified to citrulline: Arg-25 and Arg-31. Thr-35 bears the Phosphothreonine mark. Position 40 is a phosphoserine (Ser-40). Omega-N-methylarginine occurs at positions 43 and 49. An induces experimental autoimmune encephalomyelitis (EAE) 1 region spans residues 45 to 87 (FGSDRAAPKRGSGKDSHHAARTTHYGSLPQKSQRSQDENPVVH). Residues 46 to 114 (GSDRAAPKRG…GRGLSLSRFS (69 aa)) form a disordered region. Ser-56 is subject to Phosphoserine. A Phosphothreonine modification is found at Thr-67. A Phosphotyrosine modification is found at Tyr-69. Phosphoserine is present on Ser-76. Phosphothreonine is present on residues Thr-94 and Thr-97. Gln-102 carries the post-translational modification Deamidated glutamine. Arg-106 carries the post-translational modification Omega-N-methylarginine; alternate. Arg-106 carries the symmetric dimethylarginine; alternate modification. Ser-114 is modified (phosphoserine). Residues 114-122 (SWGAEGQKP) form an induces experimental autoimmune encephalomyelitis (EAE) 2 region. The residue at position 121 (Lys-121) is an N6-acetyllysine. Arg-129 is modified (citrulline). Residues 136–167 (GFKGAHDAQGTLSKIFKLGGRDSRSGSPMARR) are disordered. Position 144 is a deamidated glutamine (Gln-144). Arg-156 carries the post-translational modification Citrulline. The residue at position 158 (Ser-158) is a Phosphoserine. Phosphoserine; by UHMK1 is present on Ser-162. Arg-167 carries the citrulline modification.

The protein belongs to the myelin basic protein family. Homodimer. In terms of processing, at least 5 charge isomers; C1 (the most cationic, least modified, and most abundant form), C2, C3, C4 and C5 (the least cationic form); are produced as a result of optional post-translational modifications such as phosphorylation of serine or threonine residues, deamidation of glutamine or asparagine residues, citrullination and methylation of arginine residues. C1 and C2 are unphosphorylated, C3 and C4 are monophosphorylated and C5 is phosphorylated at two positions. Phosphorylated by TAOK2, VRK2, MAPK11, MAPK12, MAPK14 and MINK1. Post-translationally, proteolytically cleaved in B cell lysosomes by cathepsin CTSG which degrades the major immunogenic MBP epitope and prevents the activation of MBP-specific autoreactive T cells. Found in both the central and the peripheral nervous system.

It localises to the myelin membrane. Is, with PLP, the most abundant protein component of the myelin membrane in the CNS. Has a role in both the formation and stabilization of this compact multilayer arrangement of bilayers. Each splice variant and charge isomer may have a specialized function in the assembly of an optimized, biochemically functional myelin membrane. The chain is Myelin basic protein (MBP) from Cavia porcellus (Guinea pig).